Consider the following 729-residue polypeptide: Phosphoribosylformylglycinamidine synthase subunit PurL (729 aa).

Histidine 54 is a catalytic residue. ATP contacts are provided by tyrosine 57 and lysine 96. Glutamate 98 contributes to the Mg(2+) binding site. Substrate contacts are provided by residues 99–102 (SHNH) and arginine 121. Histidine 100 acts as the Proton acceptor in catalysis. Aspartate 122 lines the Mg(2+) pocket. Glutamine 245 contacts substrate. A Mg(2+)-binding site is contributed by aspartate 273. Residue 317–319 (ETQ) coordinates substrate. Residues aspartate 495 and glycine 532 each contribute to the ATP site. Position 533 (asparagine 533) interacts with Mg(2+). Serine 535 contributes to the substrate binding site.

It belongs to the FGAMS family. As to quaternary structure, monomer. Part of the FGAM synthase complex composed of 1 PurL, 1 PurQ and 2 PurS subunits.

It localises to the cytoplasm. The catalysed reaction is N(2)-formyl-N(1)-(5-phospho-beta-D-ribosyl)glycinamide + L-glutamine + ATP + H2O = 2-formamido-N(1)-(5-O-phospho-beta-D-ribosyl)acetamidine + L-glutamate + ADP + phosphate + H(+). It functions in the pathway purine metabolism; IMP biosynthesis via de novo pathway; 5-amino-1-(5-phospho-D-ribosyl)imidazole from N(2)-formyl-N(1)-(5-phospho-D-ribosyl)glycinamide: step 1/2. In terms of biological role, part of the phosphoribosylformylglycinamidine synthase complex involved in the purines biosynthetic pathway. Catalyzes the ATP-dependent conversion of formylglycinamide ribonucleotide (FGAR) and glutamine to yield formylglycinamidine ribonucleotide (FGAM) and glutamate. The FGAM synthase complex is composed of three subunits. PurQ produces an ammonia molecule by converting glutamine to glutamate. PurL transfers the ammonia molecule to FGAR to form FGAM in an ATP-dependent manner. PurS interacts with PurQ and PurL and is thought to assist in the transfer of the ammonia molecule from PurQ to PurL. The chain is Phosphoribosylformylglycinamidine synthase subunit PurL from Staphylococcus aureus (strain bovine RF122 / ET3-1).